Consider the following 80-residue polypeptide: CLAVATA3/ESR (CLE)-related protein 14 (80 aa).

Positions 1–26 (MKVWSQRLSFLIVMIFILAGLHSSSA) are cleaved as a signal peptide. A hydroxyproline mark is found at proline 71 and proline 74. O-linked (Ara...) hydroxyproline glycosylation is present at proline 74.

It belongs to the CLV3/ESR signal peptide family. Interacts with the extracellular leucine-rich repeat region of CLV2 and PEPR2. In terms of processing, the O-glycosylation (arabinosylation) of the hydroxyproline Pro-74 enhances binding affinity of the CLE14p peptide for its receptor. Mostly expressed in roots, and, to a lower extent, in seedlings and leaves. Expressed in the primary root tip under Pi deficiency.

Its subcellular location is the secreted. The protein localises to the extracellular space. Its function is as follows. Extracellular signal peptide that regulates cell fate. Represses root apical meristem maintenance. Acts as an elicitor of the root meristem differentiation through the CLV2/CRN complex signaling pathway. Inhibits irreversibly root growth by reducing cell division rates in the root apical meristem. Regulates the transition of protophloem cells from proliferation to differentiation, thus impinging on postembryonic growth capacity of the root meristem; this signaling pathway requires CRN and CLV2. The protein is CLAVATA3/ESR (CLE)-related protein 14 of Arabidopsis thaliana (Mouse-ear cress).